Consider the following 430-residue polypeptide: Tol-Pal system protein TolB (430 aa).

The signal sequence occupies residues 1-26; it reads MSLMTKLGLRALVASCLIAAGGAAHA.

It belongs to the TolB family. In terms of assembly, the Tol-Pal system is composed of five core proteins: the inner membrane proteins TolA, TolQ and TolR, the periplasmic protein TolB and the outer membrane protein Pal. They form a network linking the inner and outer membranes and the peptidoglycan layer.

Its subcellular location is the periplasm. Functionally, part of the Tol-Pal system, which plays a role in outer membrane invagination during cell division and is important for maintaining outer membrane integrity. The polypeptide is Tol-Pal system protein TolB (Paraburkholderia phymatum (strain DSM 17167 / CIP 108236 / LMG 21445 / STM815) (Burkholderia phymatum)).